The chain runs to 426 residues: Serine--tRNA ligase (426 aa).

233-235 (TAE) lines the L-serine pocket. Residue 264-266 (RSE) coordinates ATP. Glutamate 287 is a binding site for L-serine. 351-354 (EISS) lines the ATP pocket. Serine 387 contributes to the L-serine binding site.

This sequence belongs to the class-II aminoacyl-tRNA synthetase family. Type-1 seryl-tRNA synthetase subfamily. Homodimer. The tRNA molecule binds across the dimer.

It localises to the cytoplasm. The enzyme catalyses tRNA(Ser) + L-serine + ATP = L-seryl-tRNA(Ser) + AMP + diphosphate + H(+). It catalyses the reaction tRNA(Sec) + L-serine + ATP = L-seryl-tRNA(Sec) + AMP + diphosphate + H(+). The protein operates within aminoacyl-tRNA biosynthesis; selenocysteinyl-tRNA(Sec) biosynthesis; L-seryl-tRNA(Sec) from L-serine and tRNA(Sec): step 1/1. Functionally, catalyzes the attachment of serine to tRNA(Ser). Is also able to aminoacylate tRNA(Sec) with serine, to form the misacylated tRNA L-seryl-tRNA(Sec), which will be further converted into selenocysteinyl-tRNA(Sec). The protein is Serine--tRNA ligase of Pseudomonas syringae pv. syringae (strain B728a).